Here is a 248-residue protein sequence, read N- to C-terminus: Ras-like protein family member 11B (248 aa).

The tract at residues Ala-30–Val-248 is small GTPase-like. GTP is bound by residues Gly-41–Thr-48, Asp-88–Leu-99, and Asn-153–Asp-156. Residues Gln-206–Gln-228 are disordered.

This sequence belongs to the small GTPase superfamily. Ras family.

The enzyme catalyses GTP + H2O = GDP + phosphate + H(+). The polypeptide is Ras-like protein family member 11B (Xenopus laevis (African clawed frog)).